The primary structure comprises 185 residues: Ribosome-recycling factor (185 aa).

The disordered stretch occupies residues 138–159; the sequence is KVKKLEKDKEISEDESKKAQEQ.

Belongs to the RRF family.

Its subcellular location is the cytoplasm. Its function is as follows. Responsible for the release of ribosomes from messenger RNA at the termination of protein biosynthesis. May increase the efficiency of translation by recycling ribosomes from one round of translation to another. This Helicobacter acinonychis (strain Sheeba) protein is Ribosome-recycling factor.